Reading from the N-terminus, the 408-residue chain is MSTAADSPLSLAHYYLPVYRPRQVVLERGQGSRVWDDQGREYLDLSSGIAVSGLGHNDPDLMAALTEQAGKLWHTSNVFFSAPPLKLAEELVTASRFAQKVFLCNSGTEANEAAIKLVRKWASSQGRPADKRVIVTFRGSFHGRTLASVTATAQPKYQEGYEPLPGGFRYVDFNDVPALESAMASGDVAAVMLEPIQGEGGVMPAAPGFLARVRALCDQHDALLVLDEIQCGMGRTGSLFAHWQEQVTPDIVTLAKALGGGFPIGAMLAGPKVAETMQFGAHGTTFGGNPLAAAVARVALRKLASPQIAENVARQSAALRAGLEALNAEFGVFAQIRGRGLMLGAVLAPAHAGQAGAILDLAAAHGLLLLQAGPDVLRFVPALNLTDAELADGLARLRLAIAAYVAQH.

Pyridoxal 5'-phosphate contacts are provided by residues 107-108 and F141; that span reads GT. R144 is a N(2)-acetyl-L-ornithine binding site. Residue 227 to 230 participates in pyridoxal 5'-phosphate binding; sequence DEIQ. Position 256 is an N6-(pyridoxal phosphate)lysine (K256). N(2)-acetyl-L-ornithine is bound at residue T284. Residue T285 participates in pyridoxal 5'-phosphate binding.

Belongs to the class-III pyridoxal-phosphate-dependent aminotransferase family. ArgD subfamily. In terms of assembly, homodimer. Pyridoxal 5'-phosphate is required as a cofactor.

Its subcellular location is the cytoplasm. The enzyme catalyses N(2)-acetyl-L-ornithine + 2-oxoglutarate = N-acetyl-L-glutamate 5-semialdehyde + L-glutamate. It participates in amino-acid biosynthesis; L-arginine biosynthesis; N(2)-acetyl-L-ornithine from L-glutamate: step 4/4. The chain is Acetylornithine aminotransferase from Xanthomonas campestris pv. campestris (strain ATCC 33913 / DSM 3586 / NCPPB 528 / LMG 568 / P 25).